We begin with the raw amino-acid sequence, 367 residues long: Probable butyrate kinase (367 aa).

It belongs to the acetokinase family.

Its subcellular location is the cytoplasm. The enzyme catalyses butanoate + ATP = butanoyl phosphate + ADP. The sequence is that of Probable butyrate kinase from Bacillus anthracis (strain A0248).